Reading from the N-terminus, the 249-residue chain is uncharacterized protein (249 aa).

An NADP(+)-binding site is contributed by 11–34 (IFGGRSQIGGELARRLAAGATMVL). Ser142 contacts substrate. Tyr155 acts as the Proton acceptor in catalysis.

It belongs to the short-chain dehydrogenases/reductases (SDR) family.

This is an uncharacterized protein from Mycobacterium tuberculosis (strain CDC 1551 / Oshkosh).